We begin with the raw amino-acid sequence, 140 residues long: Nucleoside diphosphate kinase (140 aa).

The ATP site is built by Lys-11, Phe-59, Arg-87, Thr-93, Arg-104, and Asn-114. The active-site Pros-phosphohistidine intermediate is His-117.

The protein belongs to the NDK family. As to quaternary structure, homotetramer. The cofactor is Mg(2+).

The protein localises to the cytoplasm. The catalysed reaction is a 2'-deoxyribonucleoside 5'-diphosphate + ATP = a 2'-deoxyribonucleoside 5'-triphosphate + ADP. It carries out the reaction a ribonucleoside 5'-diphosphate + ATP = a ribonucleoside 5'-triphosphate + ADP. Functionally, major role in the synthesis of nucleoside triphosphates other than ATP. The ATP gamma phosphate is transferred to the NDP beta phosphate via a ping-pong mechanism, using a phosphorylated active-site intermediate. This chain is Nucleoside diphosphate kinase, found in Bartonella tribocorum (strain CIP 105476 / IBS 506).